The chain runs to 142 residues: Small heat shock protein IbpB (142 aa).

One can recognise a sHSP domain in the interval 26–137 (AGESQSFPPY…AAQRIAISER (112 aa)).

This sequence belongs to the small heat shock protein (HSP20) family. In terms of assembly, homodimer. Forms homomultimers of about 100-150 subunits at optimal growth temperatures. Conformation changes to oligomers at high temperatures or high ionic concentrations. The decrease in size of the multimers is accompanied by an increase in chaperone activity.

The protein resides in the cytoplasm. In terms of biological role, associates with aggregated proteins, together with IbpA, to stabilize and protect them from irreversible denaturation and extensive proteolysis during heat shock and oxidative stress. Aggregated proteins bound to the IbpAB complex are more efficiently refolded and reactivated by the ATP-dependent chaperone systems ClpB and DnaK/DnaJ/GrpE. Its activity is ATP-independent. The sequence is that of Small heat shock protein IbpB from Escherichia coli O7:K1 (strain IAI39 / ExPEC).